A 315-amino-acid polypeptide reads, in one-letter code: MFQFVTPVGTQNGLKATCAKISPDGQFLAITQGLNILIYDINRRTVSQTLVTSHARPFSELCWSPDGQCIATASDDFSVEIIHLSYGLLHTFIGHTAPVISLTFNRKGNLLFTSSMDESIKIWDTLNGSLMKTISAHSEAVVSVDVPMNDSSILSSGSYDGLIRIFDAETGHCLKTLTYDKDWKRENGVVPISQVKFSENARYLLVKSLDGVVKIWDCIGGCVVRTFQVQPLEKGVLHHSCGMDFLNPEDGSTPLVISGYENGDIYCWNSDTKSLLQLLDGSLYHHSSPVMSIHCFGNIMCSLALNGDCCLWRWV.

6 WD repeats span residues 53-93, 94-133, 136-178, 187-228, 238-278, and 285-315; these read SHAR…HTFI, GHTAPVISLTFNRKGNLLFTSSMDESIKIWDTLNGSLMKT, AHSE…KTLT, NGVV…RTFQ, HHSC…LLQL, and HHSSPVMSIHCFGNIMCSLALNGDCCLWRWV.

As to quaternary structure, component of the Set1C/COMPASS complex which consists of SET1(2), BRE2(2), SPP1(2), SDC1(1), SHG1(1), SWD1(1), SWD2(1), and SWD3(1).

It is found in the nucleus. It localises to the chromosome. Its subcellular location is the telomere. Functionally, the COMPASS (Set1C) complex specifically mono-, di- and trimethylates histone H3 to form H3K4me1/2/3, which subsequently plays a role in telomere length maintenance and transcription elongation regulation. COMPASS recognizes ubiquitinated H2B on one face of the nucleosome which stimulates the methylation of H3 on the opposing face. SWD3/CPS30 establishes COMPASS trimethylation activity and may also serve as the anchor point to properly tether and space the other subunits. The protein is COMPASS component SWD3 of Saccharomyces cerevisiae (strain ATCC 204508 / S288c) (Baker's yeast).